The following is a 247-amino-acid chain: Acidic leucine-rich nuclear phosphoprotein 32 family member A (247 aa).

T15 is subject to Phosphothreonine. S17 bears the Phosphoserine mark. LRR repeat units follow at residues 18–41, 43–64, 65–87, and 89–110; these read DVKE…TDEF, ELEF…PKLN, KLKK…AEKC, and NLKH…EPLK. Residues 123-161 enclose the LRRCT domain; sequence CEVTNLNAYRENVFKLLPQVMYLDGYDRDNKEAPDSDVE. The interval 150–172 is necessary for tumor-suppressive function; the sequence is RDNKEAPDSDVEGYVEDDDEEDE. The interval 150–247 is disordered; it reads RDNKEAPDSD…EPDDEGQEDD (98 aa). Residues 157–230 show a composition bias toward acidic residues; the sequence is DSDVEGYVED…EDEEDAAEEE (74 aa). S158 and S202 each carry phosphoserine. Positions 165-247 are interaction with E4F1; that stretch reads EDDDEEDEDE…EPDDEGQEDD (83 aa).

This sequence belongs to the ANP32 family. Component of the SET complex, composed of at least ANP32A, APEX1, HMGB2, NME1, SET and TREX1. Directly interacts with SET. Interacts with ATXN1/SCA1. Interacts with MAP1B. Interacts with ELAVL1. Part of the INHAT (inhibitor of histone acetyltransferases) complex. Interacts with E4F1. In terms of processing, phosphorylated on serine residues, at least in part by casein kinase 2/CK2. Some glutamate residues are glycylated by TTLL8. This modification occurs exclusively on glutamate residues and results in a glycine chain on the gamma-carboxyl group. Widely distributed in the central nervous system, with an abundant expression in the cerebellum.

The protein resides in the nucleus. Its subcellular location is the cytoplasm. The protein localises to the endoplasmic reticulum. In terms of biological role, multifunctional protein that is involved in the regulation of many processes including tumor suppression, apoptosis, cell cycle progression or transcription. Promotes apoptosis by favouring the activation of caspase-9/CASP9 and allowing apoptosome formation. In addition, plays a role in the modulation of histone acetylation and transcription as part of the INHAT (inhibitor of histone acetyltransferases) complex. Inhibits the histone-acetyltranferase activity of EP300/CREBBP (CREB-binding protein) and EP300/CREBBP-associated factor by histone masking. Preferentially binds to unmodified histone H3 and sterically inhibiting its acetylation and phosphorylation leading to cell growth inhibition. Participates in other biochemical processes such as regulation of mRNA nuclear-to-cytoplasmic translocation and stability by its association with ELAVL1 (Hu-antigen R). Plays a role in E4F1-mediated transcriptional repression as well as inhibition of protein phosphatase 2A. In Rattus norvegicus (Rat), this protein is Acidic leucine-rich nuclear phosphoprotein 32 family member A (Anp32a).